Consider the following 240-residue polypeptide: Sorting nexin-3 (240 aa).

The disordered stretch occupies residues 1–85; it reads MSAYPQDTYF…PPVQVTHSPF (85 aa). Residues 22–33 are compositionally biased toward pro residues; the sequence is YQPPPQPQPQQP. 2 stretches are compositionally biased toward low complexity: residues 34-54 and 62-84; these read PYQQ…QPYQ and QQSP…THSP. Positions 118–235 constitute a PX domain; that stretch reads SFLEIEIRNP…CAFLQDPAWD (118 aa). Residues R161, S163, K187, R192, and R201 each coordinate a 1,2-diacyl-sn-glycero-3-phospho-(1D-myo-inositol-3-phosphate).

Belongs to the sorting nexin family.

Its subcellular location is the cytoplasm. It localises to the golgi apparatus membrane. The protein localises to the prevacuolar compartment membrane. In terms of biological role, required for retention of late Golgi membrane proteins. Component of the retrieval machinery that functions by direct interaction with the cytosolic tails of certain TGN membrane proteins during the sorting/budding process at the prevacuolar compartment. Binds phosphatidylinositol 3-phosphate (PtdIns(P3)). This chain is Sorting nexin-3 (SNX3), found in Cryptococcus neoformans var. neoformans serotype D (strain JEC21 / ATCC MYA-565) (Filobasidiella neoformans).